The primary structure comprises 167 residues: Large ribosomal subunit protein uL23 (167 aa).

The tract at residues 1–118 (MNVNEIIKGP…TEEKAKIAKK (118 aa)) is large ribosomal subunit protein uL23. Disordered regions lie at residues 91–112 (FEDE…TEEK) and 136–167 (KQAE…NSAN). 2 stretches are compositionally biased toward basic and acidic residues: residues 97–112 (QDQK…TEEK) and 136–157 (KQAE…RIEN). The interval 119–167 (KAELEAKNKEIAEKLAKKQAELAKKDSETNENQEKRIENQTENQENSAN) is unknown. The span at 158–167 (QTENQENSAN) shows a compositional bias: polar residues.

This sequence belongs to the universal ribosomal protein uL23 family. In terms of assembly, part of the 50S ribosomal subunit. Contacts protein L29, and trigger factor when it is bound to the ribosome.

One of the early assembly proteins it binds 23S rRNA. One of the proteins that surrounds the polypeptide exit tunnel on the outside of the ribosome. Forms the main docking site for trigger factor binding to the ribosome. This is Large ribosomal subunit protein uL23 from Mesomycoplasma hyopneumoniae (strain J / ATCC 25934 / NCTC 10110) (Mycoplasma hyopneumoniae).